The sequence spans 701 residues: ABC transporter G family member 23 (701 aa).

The region spanning 7–237 (INLNNVSRSY…YECSLLEDVY (231 aa)) is the ABC transporter domain. 39 to 46 (GSSGSGKT) contributes to the ATP binding site. 6 helical membrane-spanning segments follow: residues 335-355 (FPLV…FLAI), 493-513 (FLAP…FLSI), 541-561 (HILA…LIAV), 574-596 (LIYL…ISLI), 608-628 (LAIF…EAII), and 665-685 (LIII…STPI). The region spanning 459–686 (FQKAFNKIAN…SLIVISTPIG (228 aa)) is the ABC transmembrane type-2 domain.

The protein belongs to the ABC transporter superfamily. ABCG family.

The protein resides in the membrane. This Dictyostelium discoideum (Social amoeba) protein is ABC transporter G family member 23 (abcG23).